We begin with the raw amino-acid sequence, 283 residues long: Bifunctional protein FolD (283 aa).

G166 to S168 contributes to the NADP(+) binding site.

The protein belongs to the tetrahydrofolate dehydrogenase/cyclohydrolase family. As to quaternary structure, homodimer.

The catalysed reaction is (6R)-5,10-methylene-5,6,7,8-tetrahydrofolate + NADP(+) = (6R)-5,10-methenyltetrahydrofolate + NADPH. The enzyme catalyses (6R)-5,10-methenyltetrahydrofolate + H2O = (6R)-10-formyltetrahydrofolate + H(+). The protein operates within one-carbon metabolism; tetrahydrofolate interconversion. Catalyzes the oxidation of 5,10-methylenetetrahydrofolate to 5,10-methenyltetrahydrofolate and then the hydrolysis of 5,10-methenyltetrahydrofolate to 10-formyltetrahydrofolate. The protein is Bifunctional protein FolD of Coxiella burnetii (strain CbuG_Q212) (Coxiella burnetii (strain Q212)).